The sequence spans 224 residues: Haloacetate dehalogenase H-2 (224 aa).

D10 serves as the catalytic Nucleophile.

This sequence belongs to the HAD-like hydrolase superfamily. S-2-haloalkanoic acid dehalogenase family.

It catalyses the reaction a haloacetate + H2O = a halide anion + glycolate + H(+). The polypeptide is Haloacetate dehalogenase H-2 (dehH2) (Moraxella sp. (strain B)).